The primary structure comprises 357 residues: Guanine nucleotide-binding protein G(o) subunit alpha (357 aa).

A lipid anchor (N-myristoyl glycine) is attached at Gly2. Residue Cys3 is the site of S-palmitoyl cysteine attachment. One can recognise a G-alpha domain in the interval 32 to 357 (KDIKLLLLGA…ANNLRGCGLY (326 aa)). The segment at 35–48 (KLLLLGAGESGKST) is G1 motif. GTP-binding positions include 40–47 (GAGESGKS), 179–185 (LRTRVKT), 204–208 (DVGGQ), 273–276 (NKKD), and Ala329. Ser47 and Thr185 together coordinate Mg(2+). The G2 motif stretch occupies residues 177 to 185 (DILRTRVKT). The tract at residues 200–209 (FKLFDVGGQR) is G3 motif. The G4 motif stretch occupies residues 269–276 (ILFLNKKD). Residues 327 to 332 (TCATDT) are G5 motif.

This sequence belongs to the G-alpha family. G(i/o/t/z) subfamily. As to quaternary structure, g proteins are composed of 3 units; alpha, beta and gamma. The alpha chain contains the guanine nucleotide binding site.

Functionally, guanine nucleotide-binding proteins (G proteins) are involved as modulators or transducers in various transmembrane signaling systems. The G(o) protein function is not clear. This Mizuhopecten yessoensis (Japanese scallop) protein is Guanine nucleotide-binding protein G(o) subunit alpha (SCGOA).